We begin with the raw amino-acid sequence, 126 residues long: Phosphoribosyl-ATP pyrophosphatase (126 aa).

This sequence belongs to the PRA-PH family.

It is found in the cytoplasm. The enzyme catalyses 1-(5-phospho-beta-D-ribosyl)-ATP + H2O = 1-(5-phospho-beta-D-ribosyl)-5'-AMP + diphosphate + H(+). Its pathway is amino-acid biosynthesis; L-histidine biosynthesis; L-histidine from 5-phospho-alpha-D-ribose 1-diphosphate: step 2/9. The protein is Phosphoribosyl-ATP pyrophosphatase of Variovorax paradoxus (strain S110).